The following is a 287-amino-acid chain: ATP synthase gamma chain (287 aa).

Belongs to the ATPase gamma chain family. As to quaternary structure, F-type ATPases have 2 components, CF(1) - the catalytic core - and CF(0) - the membrane proton channel. CF(1) has five subunits: alpha(3), beta(3), gamma(1), delta(1), epsilon(1). CF(0) has three main subunits: a, b and c.

It is found in the cell membrane. In terms of biological role, produces ATP from ADP in the presence of a proton gradient across the membrane. The gamma chain is believed to be important in regulating ATPase activity and the flow of protons through the CF(0) complex. The protein is ATP synthase gamma chain of Wolbachia sp. subsp. Drosophila simulans (strain wRi).